Reading from the N-terminus, the 435-residue chain is Nucleoredoxin (435 aa).

The residue at position 2 (Ser2) is an N-acetylserine. Positions 167-321 (PKPFREVIAG…VLELSDSNAA (155 aa)) constitute a Thioredoxin domain.

It belongs to the nucleoredoxin family. In terms of assembly, associates with the phosphatase 2A holoenzyme. Interacts with PPP2CA; the interaction is direct. Interacts with DVL1 (via PDZ domain); the interaction is direct and regulated by oxidative stress.

The protein resides in the cytoplasm. Its subcellular location is the cytosol. It is found in the nucleus. It carries out the reaction [protein]-dithiol + NAD(+) = [protein]-disulfide + NADH + H(+). The catalysed reaction is [protein]-dithiol + NADP(+) = [protein]-disulfide + NADPH + H(+). Functionally, functions as a redox-dependent negative regulator of the Wnt signaling pathway, possibly by preventing ubiquitination of DVL3 by the BCR(KLHL12) complex. May also function as a transcriptional regulator act as a regulator of protein phosphatase 2A (PP2A). The polypeptide is Nucleoredoxin (NXN) (Homo sapiens (Human)).